We begin with the raw amino-acid sequence, 432 residues long: Testis-specific Y-encoded-like protein 1 (432 aa).

3 disordered regions span residues Met-1–Ser-31, Ala-54–Ala-110, and Thr-116–Glu-135. Residue Lys-160 forms a Glycyl lysine isopeptide (Lys-Gly) (interchain with G-Cter in SUMO2) linkage.

The protein belongs to the nucleosome assembly protein (NAP) family. In terms of processing, ubiquitinated by the CRL2(APPBP2) complex, which recognizes the Arg-Xaa-Xaa-Gly sequence at the C-terminus, leading to its degradation.

It is found in the nucleus. The protein localises to the nucleolus. This chain is Testis-specific Y-encoded-like protein 1 (TSPYL1), found in Bos taurus (Bovine).